A 206-amino-acid chain; its full sequence is Large ribosomal subunit protein uL22m (206 aa).

Residues 1–40 constitute a mitochondrion transit peptide; that stretch reads MAAALLRELGALRVPNLRIWATQTLRVLPPSCIHTSASLD.

It belongs to the universal ribosomal protein uL22 family. Component of the mitochondrial ribosome large subunit (39S) which comprises a 16S rRNA and about 50 distinct proteins.

The protein localises to the mitochondrion. The polypeptide is Large ribosomal subunit protein uL22m (Mrpl22) (Mus musculus (Mouse)).